The primary structure comprises 361 residues: Putative agmatine deiminase (361 aa).

Cys-354 acts as the Amidino-cysteine intermediate in catalysis.

This sequence belongs to the agmatine deiminase family.

It carries out the reaction agmatine + H2O = N-carbamoylputrescine + NH4(+). The polypeptide is Putative agmatine deiminase (Streptococcus pneumoniae (strain Hungary19A-6)).